We begin with the raw amino-acid sequence, 356 residues long: MKKSDFHYDLPEELIAQAPLAERAASRLLVVPPTPAAFSDRQVRDLPELLQPGDLLIFNDTRVIPARLFGQKASGGRVEILIERLLGGQQARAQIGASKSPKAGSVIALDAGGQAEVLGRDGEFYLLRFDIPAPLEHWLLDAGRLPLPPYIRREPGLDDRERYQTVFAREVGAVAAPTAGLHFDEALLARLRERGVEFGHVTLHVGAGTFQPVRVDALDKHVMHTEWLNVGAALVEQVRRTRARGGRVIAVGTTVVRSLESAWRKTDDAPHGELQSFAGETQIFILPGYRIRSVDAMVTNFHLPESTLLMMVSAFAGCDRIFAAYAHAIAQRYRFFSYGDAMLLWSREWGIGNGES.

The protein belongs to the QueA family. As to quaternary structure, monomer.

The protein localises to the cytoplasm. It catalyses the reaction 7-aminomethyl-7-carbaguanosine(34) in tRNA + S-adenosyl-L-methionine = epoxyqueuosine(34) in tRNA + adenine + L-methionine + 2 H(+). The protein operates within tRNA modification; tRNA-queuosine biosynthesis. Transfers and isomerizes the ribose moiety from AdoMet to the 7-aminomethyl group of 7-deazaguanine (preQ1-tRNA) to give epoxyqueuosine (oQ-tRNA). This is S-adenosylmethionine:tRNA ribosyltransferase-isomerase from Xanthomonas campestris pv. campestris (strain 8004).